Reading from the N-terminus, the 421-residue chain is Myb-related protein Pp2 (421 aa).

HTH myb-type domains follow at residues 9-61 (KVGL…TNYL) and 62-116 (RPDL…KKRL). DNA-binding regions (H-T-H motif) lie at residues 37 to 61 (WRAI…TNYL) and 89 to 112 (WSRI…NTRL). The disordered stretch occupies residues 119 to 240 (QGLDPNTHLP…VTTKSHEDHR (122 aa)). Acidic residues predominate over residues 136-147 (DTEDDTDDEGGD).

The protein localises to the nucleus. In terms of biological role, possible transcription activator. This chain is Myb-related protein Pp2 (PP2), found in Physcomitrium patens (Spreading-leaved earth moss).